The sequence spans 1372 residues: DNA-directed RNA polymerase subunit beta (1372 aa).

The protein belongs to the RNA polymerase beta chain family. In terms of assembly, the RNAP catalytic core consists of 2 alpha, 1 beta, 1 beta' and 1 omega subunit. When a sigma factor is associated with the core the holoenzyme is formed, which can initiate transcription.

The enzyme catalyses RNA(n) + a ribonucleoside 5'-triphosphate = RNA(n+1) + diphosphate. In terms of biological role, DNA-dependent RNA polymerase catalyzes the transcription of DNA into RNA using the four ribonucleoside triphosphates as substrates. The polypeptide is DNA-directed RNA polymerase subunit beta (Rickettsia bellii (strain RML369-C)).